A 189-amino-acid polypeptide reads, in one-letter code: Potassium-transporting ATPase KdpC subunit (189 aa).

A helical transmembrane segment spans residues 6–26 (PAILLFIMFTIICGGIYPALV).

Belongs to the KdpC family. The system is composed of three essential subunits: KdpA, KdpB and KdpC.

It is found in the cell inner membrane. In terms of biological role, part of the high-affinity ATP-driven potassium transport (or Kdp) system, which catalyzes the hydrolysis of ATP coupled with the electrogenic transport of potassium into the cytoplasm. This subunit acts as a catalytic chaperone that increases the ATP-binding affinity of the ATP-hydrolyzing subunit KdpB by the formation of a transient KdpB/KdpC/ATP ternary complex. The chain is Potassium-transporting ATPase KdpC subunit from Trichlorobacter lovleyi (strain ATCC BAA-1151 / DSM 17278 / SZ) (Geobacter lovleyi).